Reading from the N-terminus, the 286-residue chain is ATP synthase gamma chain (286 aa).

The protein belongs to the ATPase gamma chain family. As to quaternary structure, F-type ATPases have 2 components, CF(1) - the catalytic core - and CF(0) - the membrane proton channel. CF(1) has five subunits: alpha(3), beta(3), gamma(1), delta(1), epsilon(1). CF(0) has three main subunits: a, b and c.

It localises to the cell inner membrane. Produces ATP from ADP in the presence of a proton gradient across the membrane. The gamma chain is believed to be important in regulating ATPase activity and the flow of protons through the CF(0) complex. The chain is ATP synthase gamma chain from Teredinibacter turnerae (strain ATCC 39867 / T7901).